The primary structure comprises 231 residues: MSVSAIRIPANGSSAKAAVIFLHGLGDSGDGWSWLPQLVSQSKLINDPINYVFPNAPKIPVTINNGFAMPAWFDIYELGNPHAKQDVTGFFKSCEVLKEFILEQHNKFNIPLEKIIIGGFSQGAAISLATLALLDTKIGGCVALSGFCPVRNEITDRYNKNPGVNFDTPIFQGHGTVDPVINYDYGKQTSELYKQLGFKNLKFNTYEGVAHSASEEELADVIKFIKNIVEK.

Catalysis depends on charge relay system residues Ser121, Asp178, and His211.

The protein belongs to the AB hydrolase superfamily. AB hydrolase 2 family.

Its subcellular location is the cytoplasm. The protein resides in the nucleus. It catalyses the reaction S-hexadecanoyl-L-cysteinyl-[protein] + H2O = L-cysteinyl-[protein] + hexadecanoate + H(+). In terms of biological role, hydrolyzes fatty acids from S-acylated cysteine residues in proteins with a strong preference for palmitoylated G-alpha proteins over other acyl substrates. Mediates the deacylation of G-alpha proteins such as GPA1 in vivo, but has weak or no activity toward palmitoylated Ras proteins. Has weak lysophospholipase activity in vitro; however such activity may not exist in vivo. This Candida albicans (strain SC5314 / ATCC MYA-2876) (Yeast) protein is Acyl-protein thioesterase 1.